An 82-amino-acid polypeptide reads, in one-letter code: Small ribosomal subunit protein bS18 (82 aa).

This sequence belongs to the bacterial ribosomal protein bS18 family. Part of the 30S ribosomal subunit. Forms a tight heterodimer with protein bS6.

Binds as a heterodimer with protein bS6 to the central domain of the 16S rRNA, where it helps stabilize the platform of the 30S subunit. The sequence is that of Small ribosomal subunit protein bS18 from Rhizobium meliloti (strain 1021) (Ensifer meliloti).